Reading from the N-terminus, the 361-residue chain is Probable dual-specificity RNA methyltransferase RlmN (361 aa).

Glu-91 functions as the Proton acceptor in the catalytic mechanism. The region spanning 97–329 (QHYGLSVCVT…KKKGGNCVVR (233 aa)) is the Radical SAM core domain. Residues Cys-104 and Cys-340 are joined by a disulfide bond. The [4Fe-4S] cluster site is built by Cys-111, Cys-115, and Cys-118. S-adenosyl-L-methionine is bound by residues 163 to 164 (GE), Ser-195, 218 to 220 (SLH), and Asn-296. Cys-340 serves as the catalytic S-methylcysteine intermediate.

The protein belongs to the radical SAM superfamily. RlmN family. Requires [4Fe-4S] cluster as cofactor.

It is found in the cytoplasm. It carries out the reaction adenosine(2503) in 23S rRNA + 2 reduced [2Fe-2S]-[ferredoxin] + 2 S-adenosyl-L-methionine = 2-methyladenosine(2503) in 23S rRNA + 5'-deoxyadenosine + L-methionine + 2 oxidized [2Fe-2S]-[ferredoxin] + S-adenosyl-L-homocysteine. The enzyme catalyses adenosine(37) in tRNA + 2 reduced [2Fe-2S]-[ferredoxin] + 2 S-adenosyl-L-methionine = 2-methyladenosine(37) in tRNA + 5'-deoxyadenosine + L-methionine + 2 oxidized [2Fe-2S]-[ferredoxin] + S-adenosyl-L-homocysteine. Its function is as follows. Specifically methylates position 2 of adenine 2503 in 23S rRNA and position 2 of adenine 37 in tRNAs. The sequence is that of Probable dual-specificity RNA methyltransferase RlmN from Streptococcus pneumoniae serotype 2 (strain D39 / NCTC 7466).